A 392-amino-acid polypeptide reads, in one-letter code: Protein PrgH (392 aa).

A helical transmembrane segment spans residues 142-162; sequence IVAALAGFFILGIGTVGTLWI.

The protein localises to the cell membrane. Its function is as follows. Required for invasion of epithelial cells. This chain is Protein PrgH (prgH), found in Salmonella typhimurium (strain LT2 / SGSC1412 / ATCC 700720).